A 278-amino-acid chain; its full sequence is Tryptophan synthase alpha chain (278 aa).

Residues E50 and D61 each act as proton acceptor in the active site.

Belongs to the TrpA family. Tetramer of two alpha and two beta chains.

The catalysed reaction is (1S,2R)-1-C-(indol-3-yl)glycerol 3-phosphate + L-serine = D-glyceraldehyde 3-phosphate + L-tryptophan + H2O. It participates in amino-acid biosynthesis; L-tryptophan biosynthesis; L-tryptophan from chorismate: step 5/5. Functionally, the alpha subunit is responsible for the aldol cleavage of indoleglycerol phosphate to indole and glyceraldehyde 3-phosphate. In Nitrobacter winogradskyi (strain ATCC 25391 / DSM 10237 / CIP 104748 / NCIMB 11846 / Nb-255), this protein is Tryptophan synthase alpha chain.